A 589-amino-acid polypeptide reads, in one-letter code: MDQKVRQFEVCTQDGSVDRHGNPAIRANTGKWLTAILILVNQGLATLAFFGVGVNLVLFLTRVMGQDNAEAANNVSKWTGTVYIFSLLGAFLSDSYWGRYKTCAIFQASFVAGLMMLSLSTGALLLEPSGCGVEDSPCKPHSTFKTVLFYLSVYLIALGYGGYQPNIATFGADQFDAEDSVEGHSKIAFFSYFYLALNLGSLFSNTVLGYFEDQGEWPLGFWASAGSAFAGLVLFLIGTPKYRHFTPRESPWSRFCQVLVAATRKAKIDVHHEELNLYDSETQYTGDKKILHTKGFRFLDRAAIVTPDDEAEKVESGSKYDPWRLCSVTQVEEVKCVLRLLPIWLCTILYSVVFTQMASLFVVQGAAMKTNIKNFRIPASSMSSFDILSVAFFIFAYRRFLDPLFARLNKTERNKGLTELQRMGIGLVIAIMAMISAGIVEIHRLKNKEPESATSISSSSTLSIFWQVPQYMLIGASEVFMYVGQLEFFNSQAPTGLKSFASALCMASISLGNYVSSLLVSIVMKISTTDDVHGWIPENLNKGHLERFYFLLAGLTAADFVVYLICAKWYKYIKSEASFSESVTEEEEV.

The next 2 helical transmembrane spans lie at 32–52 (WLTA…FFGV) and 78–98 (WTGT…SYWG). At Thr-102 the chain carries Phosphothreonine. 10 helical membrane passes run 105-125 (IFQA…GALL), 147-167 (VLFY…QPNI), 187-207 (IAFF…SNTV), 217-237 (WPLG…LFLI), 343-363 (IWLC…LFVV), 377-397 (IPAS…IFAY), 423-443 (MGIG…VEIH), 464-484 (IFWQ…MYVG), 504-524 (LCMA…SIVM), and 548-568 (FYFL…ICAK).

Belongs to the major facilitator superfamily. Proton-dependent oligopeptide transporter (POT/PTR) (TC 2.A.17) family. As to expression, expressed in xylem parenchyma cells within the vasculature. Expressed in siliques and flowers. Higher expression in shoots than in roots.

It localises to the cell membrane. Its function is as follows. Low-affinity nitrate transporter. Involved in nitrate removal from xylem sap. Not involved in oligopeptides transport. The sequence is that of Protein NRT1/ PTR FAMILY 7.2 (NPF7.2) from Arabidopsis thaliana (Mouse-ear cress).